Consider the following 139-residue polypeptide: Ribosomal RNA large subunit methyltransferase H (139 aa).

S-adenosyl-L-methionine contacts are provided by residues L56, G88, and 107-112 (LSLMTF).

This sequence belongs to the RNA methyltransferase RlmH family. As to quaternary structure, homodimer.

The protein localises to the cytoplasm. The enzyme catalyses pseudouridine(1915) in 23S rRNA + S-adenosyl-L-methionine = N(3)-methylpseudouridine(1915) in 23S rRNA + S-adenosyl-L-homocysteine + H(+). Functionally, specifically methylates the pseudouridine at position 1915 (m3Psi1915) in 23S rRNA. This chain is Ribosomal RNA large subunit methyltransferase H, found in Coprothermobacter proteolyticus (strain ATCC 35245 / DSM 5265 / OCM 4 / BT).